The chain runs to 129 residues: NADPH-dependent 7-cyano-7-deazaguanine reductase (129 aa).

The active-site Thioimide intermediate is the C34. D41 acts as the Proton donor in catalysis. Substrate is bound by residues V56–L58 and H75–E76.

The protein belongs to the GTP cyclohydrolase I family. QueF type 1 subfamily.

The protein localises to the cytoplasm. It carries out the reaction 7-aminomethyl-7-carbaguanine + 2 NADP(+) = 7-cyano-7-deazaguanine + 2 NADPH + 3 H(+). The protein operates within tRNA modification; tRNA-queuosine biosynthesis. In terms of biological role, catalyzes the NADPH-dependent reduction of 7-cyano-7-deazaguanine (preQ0) to 7-aminomethyl-7-deazaguanine (preQ1). The protein is NADPH-dependent 7-cyano-7-deazaguanine reductase of Thioalkalivibrio sulfidiphilus (strain HL-EbGR7).